Here is a 568-residue protein sequence, read N- to C-terminus: Phosphoprotein (568 aa).

2 disordered regions span residues 1 to 22 (MDQD…PGGR) and 40 to 320 (PTDI…GIGE). Residues 7-20 (ILKEDSEVERKAPG) show a composition bias toward basic and acidic residues. Positions 33-41 (DAVLSSEPT) are N0 binding. Positions 50 to 60 (LHNTINTSQGP) are enriched in polar residues. Ser-68 bears the Phosphoserine; by host mark. Positions 83–101 (RSGEESRVSGRTSKPEAEA) are enriched in basic and acidic residues. A Phosphoserine; by host modification is found at Ser-125. The span at 150–168 (GIEDENREMAAHPDKRGED) shows a compositional bias: basic and acidic residues. The segment covering 191–206 (ASNNGRSMEPGSSHSA) has biased composition (polar residues). A phosphoserine; by host mark is found at Ser-192, Ser-249, and Ser-257. Positions 344-411 (FESSRDASYV…SFRDIYKRFS (68 aa)) are multimerization. Positions 364–429 (YAEMTFNVCG…LLMSNLSTLH (66 aa)) form a coiled coil. A l protein binding region spans residues 412-445 (EYQKEQNSLLMSNLSTLHIITDRGGKTDNTDSLT). A phosphoserine; by host mark is found at Ser-447 and Ser-449. Residues 479 to 568 (DLIREDEFRD…VEEDIESLTN (90 aa)) are interaction with the nucleocapsid (N-RNA).

This sequence belongs to the respirovirus P protein family. Homotetramer. Interacts (via multimerization domain) with polymerase L; this interaction forms the polymerase complex. Interacts (via N-terminus) with N0; this interaction allows P to chaperon N0 before encapsidation and form the N-P complex. Interacts (via C-terminus) with N-RNA template; this interaction positions the polymerase on the template. Phosphorylated by PKC/PRKCZ, and other unknown kinases. Phosphorylation is necessary for viral transcription and replication. The N-terminus contains the majority of phosphorylated sites. Ser-249 is the major site of phosphorylation, but is not necessary for most functions.

It localises to the host cytoplasm. Essential cofactor of the RNA polymerase L that plays a central role in the transcription and replication by forming the polymerase complex with RNA polymerase L and recruiting L to the genomic N-RNA template for RNA synthesis. Also plays a central role in the encapsidation of nascent RNA chains by forming the encapsidation complex with the nucleocapsid protein N (N-P complex). Acts as a chaperone for newly synthesized free N protein, so-called N0, allowing encapsidation of nascent RNA chains during replication. The nucleoprotein protein N prevents excessive phosphorylation of P, which leads to down-regulation of viral transcription/ replication. Participates, together with N, in the formation of viral factories (viroplasms), which are large inclusions in the host cytoplasm where replication takes place. Recruits host PI4KB and remodel the host endoplasmic reticulum membrane to form viral replication factories. This chain is Phosphoprotein (P/V/C), found in Sendai virus (strain 6/94) (SeV).